A 475-amino-acid chain; its full sequence is Ribulose bisphosphate carboxylase large chain (475 aa).

A propeptide spanning residues 1–2 (MS) is cleaved from the precursor. Pro3 carries the post-translational modification N-acetylproline. Lys14 bears the N6,N6,N6-trimethyllysine mark. Positions 123 and 173 each coordinate substrate. Lys175 (proton acceptor) is an active-site residue. Substrate is bound at residue Lys177. Mg(2+)-binding residues include Lys201, Asp203, and Glu204. Position 201 is an N6-carboxylysine (Lys201). The active-site Proton acceptor is His294. Positions 295, 327, and 379 each coordinate substrate.

Belongs to the RuBisCO large chain family. Type I subfamily. As to quaternary structure, heterohexadecamer of 8 large chains and 8 small chains; disulfide-linked. The disulfide link is formed within the large subunit homodimers. Mg(2+) is required as a cofactor. In terms of processing, the disulfide bond which can form in the large chain dimeric partners within the hexadecamer appears to be associated with oxidative stress and protein turnover.

The protein resides in the plastid. The protein localises to the chloroplast. It carries out the reaction 2 (2R)-3-phosphoglycerate + 2 H(+) = D-ribulose 1,5-bisphosphate + CO2 + H2O. The enzyme catalyses D-ribulose 1,5-bisphosphate + O2 = 2-phosphoglycolate + (2R)-3-phosphoglycerate + 2 H(+). RuBisCO catalyzes two reactions: the carboxylation of D-ribulose 1,5-bisphosphate, the primary event in carbon dioxide fixation, as well as the oxidative fragmentation of the pentose substrate in the photorespiration process. Both reactions occur simultaneously and in competition at the same active site. The protein is Ribulose bisphosphate carboxylase large chain of Populus trichocarpa (Western balsam poplar).